The primary structure comprises 531 residues: MSKKTIAVIGSGAAALSLAAAFPPSYEVTVITKKSVKNSNSVYAQGGIAAAYAKDDSIEAHLEDTLYAGCGHNNLAIVADVLHDGKMMVQSLLERGFPFDRNERGGVCLGREGAHSYNRIFHAGGDATGRLLIDYLLKRINSKIKLIENETAADLLIEDGRCIGVMTKDSKGRLKVRHADEVVLAAGGCGNLFLHHTNDLTVTGDGLSLAYRAGAELTDLEFTQFHPTLLVKNGVSYGLVSEAVRGEGGCLVDENGRRIMAERHPLGDLAPRDIVSRVIHEEMAKGNRVYIDFSAISDFETRFPTITAICEKAGIDIHSGKIPVAPGMHFLMGGVSVNRWGETTVPGLYAIGETACSGLHGANRLASNSLLEALVFGKRAAEHIIQKPVYNRQYQSGLETSVFYEVPDIEGHELQSKMTSHMSILREQSSLIELSIWLHTLPFQEVNVKDITIRQMELSHLWQTAKLMTFSALLREESRGAHFRTDFPHAEVSWQGRQIVHTKKGTKIRKNEGIWNNESFTAEKITESLFS.

Residues 11–14 (SGAA), lysine 33, 40–47 (NSVYAQGG), 151–152 (TA), and aspartate 205 contribute to the FAD site. Catalysis depends on arginine 272, which acts as the Proton donor/acceptor. FAD is bound by residues glutamate 353 and 369–370 (SL).

Belongs to the FAD-dependent oxidoreductase 2 family. NadB subfamily. In terms of assembly, monomer. Homodimer. It depends on FAD as a cofactor.

The protein resides in the cytoplasm. The enzyme catalyses L-aspartate + O2 = iminosuccinate + H2O2. It carries out the reaction fumarate + L-aspartate = iminosuccinate + succinate. It functions in the pathway cofactor biosynthesis; NAD(+) biosynthesis; iminoaspartate from L-aspartate (oxidase route): step 1/1. In terms of biological role, catalyzes the oxidation of L-aspartate to iminoaspartate, the first step in the de novo biosynthesis of NAD(+). Can use either oxygen or fumarate as electron acceptors, which allows the enzyme to be functional under aerobic and anaerobic conditions. The sequence is that of L-aspartate oxidase from Bacillus subtilis (strain 168).